The sequence spans 222 residues: DnaJ homolog subfamily B member 9 (222 aa).

The first 23 residues, methionine 1 to alanine 23, serve as a signal peptide directing secretion. The 65-residue stretch at serine 26 to glycine 90 folds into the J domain. The tract at residues histidine 91–glutamine 222 is divergent targeting domain. A Phosphoserine modification is found at serine 133.

As to quaternary structure, interacts with HSPA5/BiP; interaction is direct. Interacts with ERN1/IRE1 (via the luminal region). Interacts with DERL1. Not N-glycosylated.

Its subcellular location is the endoplasmic reticulum lumen. Co-chaperone for Hsp70 protein HSPA5/BiP that acts as a key repressor of the ERN1/IRE1-mediated unfolded protein response (UPR). J domain-containing co-chaperones stimulate the ATPase activity of Hsp70 proteins and are required for efficient substrate recognition by Hsp70 proteins. In the unstressed endoplasmic reticulum, interacts with the luminal region of ERN1/IRE1 and selectively recruits HSPA5/BiP: HSPA5/BiP disrupts the dimerization of the active ERN1/IRE1 luminal region, thereby inactivating ERN1/IRE1. Also involved in endoplasmic reticulum-associated degradation (ERAD) of misfolded proteins. Required for survival of B-cell progenitors and normal antibody production. This is DnaJ homolog subfamily B member 9 from Mus musculus (Mouse).